A 101-amino-acid chain; its full sequence is Small ribosomal subunit protein uS14 (101 aa).

This sequence belongs to the universal ribosomal protein uS14 family. As to quaternary structure, part of the 30S ribosomal subunit. Contacts proteins S3 and S10.

Functionally, binds 16S rRNA, required for the assembly of 30S particles and may also be responsible for determining the conformation of the 16S rRNA at the A site. This is Small ribosomal subunit protein uS14 from Shewanella putrefaciens (strain CN-32 / ATCC BAA-453).